A 68-amino-acid polypeptide reads, in one-letter code: Long neurotoxin 1 (68 aa).

Cystine bridges form between C3/C20, C13/C41, C26/C30, C45/C56, and C57/C62.

This sequence belongs to the three-finger toxin family. Long-chain subfamily. Type II alpha-neurotoxin sub-subfamily. In terms of tissue distribution, expressed by the venom gland.

It is found in the secreted. Functionally, binds with high affinity to muscular (alpha-1/CHRNA1) and neuronal (alpha-7/CHRNA7) nicotinic acetylcholine receptor (nAChR) and inhibits acetylcholine from binding to the receptor, thereby impairing neuromuscular and neuronal transmission. The polypeptide is Long neurotoxin 1 (Aspidelaps scutatus (Shield-nose snake)).